The sequence spans 142 residues: Large ribosomal subunit protein uL11 (142 aa).

Part of the ribosomal stalk of the 50S ribosomal subunit. Interacts with L10 and the large rRNA to form the base of the stalk. L10 forms an elongated spine to which L12 dimers bind in a sequential fashion forming a multimeric L10(L12)X complex. Lys-40 is trimethylated or acetylated; other modifications may also exist.

In terms of biological role, forms part of the ribosomal stalk which helps the ribosome interact with GTP-bound translation factors. This chain is Large ribosomal subunit protein uL11, found in Rhodopseudomonas palustris (strain ATCC BAA-98 / CGA009).